A 512-amino-acid polypeptide reads, in one-letter code: Cytochrome P450 72A13 (512 aa).

A helical membrane pass occupies residues 2 to 22 (EISVASVTVSVAVVVVSWWVW). A heme-binding site is contributed by Cys-460.

Belongs to the cytochrome P450 family. Heme is required as a cofactor.

It localises to the membrane. This Arabidopsis thaliana (Mouse-ear cress) protein is Cytochrome P450 72A13 (CYP72A13).